Reading from the N-terminus, the 103-residue chain is uncharacterized protein (103 aa).

Disordered stretches follow at residues 1-20 (MIEL…WPKG) and 44-71 (LERM…HHLG). Residues 1–34 (MIELSYAPDVAGRRSNWPKGSGVNTWTAIRWTFA) form the signal peptide.

This is an uncharacterized protein from Mycobacterium tuberculosis (strain CDC 1551 / Oshkosh).